The primary structure comprises 407 residues: Biotin synthase (407 aa).

Residues 47–277 (WFGRRVKLNY…DVEVRIAGGR (231 aa)) form the Radical SAM core domain. Positions 65, 69, and 72 each coordinate [4Fe-4S] cluster. [2Fe-2S] cluster is bound by residues cysteine 109, cysteine 142, cysteine 202, and arginine 272. Residues 368-407 (GGGVCAPAPAATTPRPAEEPRTDLVAVRRRGAGTDLAPNA) are disordered. The span at 373 to 382 (APAPAATTPR) shows a compositional bias: low complexity.

Belongs to the radical SAM superfamily. Biotin synthase family. Homodimer. [4Fe-4S] cluster serves as cofactor. It depends on [2Fe-2S] cluster as a cofactor.

The enzyme catalyses (4R,5S)-dethiobiotin + (sulfur carrier)-SH + 2 reduced [2Fe-2S]-[ferredoxin] + 2 S-adenosyl-L-methionine = (sulfur carrier)-H + biotin + 2 5'-deoxyadenosine + 2 L-methionine + 2 oxidized [2Fe-2S]-[ferredoxin]. It participates in cofactor biosynthesis; biotin biosynthesis; biotin from 7,8-diaminononanoate: step 2/2. Functionally, catalyzes the conversion of dethiobiotin (DTB) to biotin by the insertion of a sulfur atom into dethiobiotin via a radical-based mechanism. The polypeptide is Biotin synthase (Streptomyces coelicolor (strain ATCC BAA-471 / A3(2) / M145)).